The following is an 874-amino-acid chain: MSIQSIVTKETLKKKDTNIEIQEKNMNDLVVSASRVIAPLWPISTFAAHHPWMGLEKQSFEQVANWLKEARNVDIYPSASMIHSAKAKGEIEESFLQIALSRWLDSQSFHMPRETAERFCQEALKLERLPSSLLSSPELNKLAEEISYVNTGSMKDSSMQPISSLIENQKGDNLSDILNYHIIKWCKLYLDDTGASWTMPNREKGFYRAWQHLITFDPALSKNERKVLKDWPEDPLIALTKALSELGISESNMQAYLEGHLLSLPGWAGMIRWRSQQSIEEQELLVEYLAVRLSMELAIVKPYLPLKNQKAEKKVSIVPLIASWIYWGDISVEKWSQMSATEQSELLAFAYRFDENTRKKLWLKAWEQTHAEQLREKIASKQRATNDKKRVVAQLAFCIDVRSEPFRRHLEKLGPFETFGIAGFFGLPIATTELGSNNSHPSLPVILKPKHQIKELTDENEYNSYEQRKKIDSSVSYTFKTMKQNVLTSMLLPEVSGPLLGLQMVTRSFVPRSVGGFIRNLRKTMLQKPNTTFSLNHVHDTNCEIPIGFTKEEKVNYVRQALKMVGLTEGFAPLVVMCGHSSQSTNNPYAAALECGACGGAAGGFNARVFATLCNLPEVREALSAEGINIPEDTIFAAAEHKTTVDELEWIYVPKLSETAQEAFDCIDSIMPNVSQHANRERLMQLPNFKTKIKNPSKEAHRFAEDWSEIRPEWGLARNASFIIGQRELTRDCDLEGRAFLHNYDWKQDESGDILASIIAGPGTVAQWINLQYYASTVAPHYYGSGNKTTQTVTAGLGVMQGNASDLLSGLPWQSVMQSDSETYHSPLRLLIVIQAPTKYIERLLNNDFTFREKVQNGWVRLASVDPEGRWKNW.

Cysteine 398, aspartate 400, histidine 580, and cysteine 595 together coordinate Zn(2+).

This sequence belongs to the inorganic carbon transporter (TC 9.A.2) DabA family. In terms of assembly, forms a complex with DabB. Requires Zn(2+) as cofactor.

The protein localises to the cell membrane. In terms of biological role, part of an energy-coupled inorganic carbon pump. The protein is Probable inorganic carbon transporter subunit DabA of Bacillus cereus (strain ZK / E33L).